The sequence spans 377 residues: Alanine racemase (377 aa).

Lys-39 acts as the Proton acceptor; specific for D-alanine in catalysis. Residue Lys-39 is modified to N6-(pyridoxal phosphate)lysine. Arg-137 is a substrate binding site. Residue Tyr-266 is the Proton acceptor; specific for L-alanine of the active site. Met-314 contributes to the substrate binding site.

The protein belongs to the alanine racemase family. Pyridoxal 5'-phosphate is required as a cofactor.

The enzyme catalyses L-alanine = D-alanine. It functions in the pathway amino-acid biosynthesis; D-alanine biosynthesis; D-alanine from L-alanine: step 1/1. Its function is as follows. Catalyzes the interconversion of L-alanine and D-alanine. May also act on other amino acids. This chain is Alanine racemase (alr), found in Symbiobacterium thermophilum (strain DSM 24528 / JCM 14929 / IAM 14863 / T).